Consider the following 283-residue polypeptide: Elongation factor Ts (283 aa).

The segment at threonine 80–valine 83 is involved in Mg(2+) ion dislocation from EF-Tu.

This sequence belongs to the EF-Ts family.

The protein localises to the cytoplasm. Functionally, associates with the EF-Tu.GDP complex and induces the exchange of GDP to GTP. It remains bound to the aminoacyl-tRNA.EF-Tu.GTP complex up to the GTP hydrolysis stage on the ribosome. The protein is Elongation factor Ts of Pectobacterium atrosepticum (strain SCRI 1043 / ATCC BAA-672) (Erwinia carotovora subsp. atroseptica).